The chain runs to 427 residues: O-methyltransferase FrzF (427 aa).

An S-adenosyl-L-methionine-binding site is contributed by Asp-281. His-327 acts as the Proton acceptor in catalysis.

It belongs to the class I-like SAM-binding methyltransferase superfamily. Cation-independent O-methyltransferase family. In terms of assembly, homodimer.

The catalysed reaction is (1S,4S)-4-[(4-hydroxyphenyl)methyl]-2,5-diazaspiro[bicyclo[3.2.1]octane-6,1'-cyclohexan]-4'-one + S-adenosyl-L-methionine = (1S,4S)-4-[(4-methoxyphenyl)methyl]-2,5-diazaspiro[bicyclo[3.2.1]octane-6,1'-cyclohexan]-4'-one + S-adenosyl-L-homocysteine + H(+). It carries out the reaction (1S,4S)-4-[(4-hydroxyphenyl)methyl]-2-methyl-2,5-diazaspiro[bicyclo[3.2.1]octane-6,1'-cyclohexan]-4'-one + S-adenosyl-L-methionine = (1S,4S)-4-[(4-methoxyphenyl)methyl]-2-methyl-2,5-diazaspiro[bicyclo[3.2.1]octane-6,1'-cyclohexan]-4'-one + S-adenosyl-L-homocysteine + H(+). The protein operates within secondary metabolite biosynthesis. In terms of biological role, O-methyltransferase; part of the gene cluster that mediates the biosynthesis of the alkaloid (-)-FR901483, a potent immunosuppressant that shows efficacy in animal models and a probable inhibitor of purine nucleotide biosynthesis by targeting phosphoribosylpyrophosphate amidotransferase (PPAT). Within the pathway, FrzF methylates the phenolic oxygen at position C4. The biosynthesis of (-)-FR901483 starts with the condensation of two L-tyrosines to yield (S,S)-dityrosyl-piperazine. This process occurs in 3 steps with the non-canonical nonribosomal peptide synthetase FrzA catalyzing the reduction of L-tyrosine into L-tyrosinal, the spontaneous condensation of 2 L-tyrosinal units, and the subsequent reduction by the NmrA-like family domain-containing oxidoreductase FrzB. The cytochrome P450 monooxygenase FrzC then performs coupling between N10 and C1' to morph the piperazine into a 1,4-diazabicyclo[3.2.1]octane spiro-fused to a 2,5-cyclohexadienone. The dienone portion is further reduced to cyclohexanone by the flavin-dependent reductase FrzD. The methyltranserases (MTs) FrzE and FrzF are then involved in the methylation at the C10' amine and the C4 phenolic oxygen, respectively. The order of the two MTs appear to be interchangeable. Cleavage of the C9-N10' bond by the dioxygenase FrzG then leads to formation of a conjugated iminium. In addition to the oxidation of C9, an additional dehydrogenation between C7 and C8 can occur to give a likely shunt product. The next biosynthetic step is the intramolecular aldol condensation catalyzed by the newly identified aldolase FrzH to yield an aza-tricyclic product with the formation of a C9-C3' bond. The short-chain dehydrogenase/reductase FrzI then produces dephospho-(-)-FR901483 that is phosphorylated at C4'-OH into (-)-FR901483 by the phosphotransferase FrzJ. In Cladobotryum sp, this protein is O-methyltransferase FrzF.